Here is a 273-residue protein sequence, read N- to C-terminus: Thiazole synthase (273 aa).

The Schiff-base intermediate with DXP role is filled by Lys-110. Residues Gly-171, 197–198 (AG), and 219–220 (NT) each bind 1-deoxy-D-xylulose 5-phosphate. Positions 251 to 273 (MAAQDSAQPSTPVLGTPFWHHAP) are disordered.

It belongs to the ThiG family. As to quaternary structure, homotetramer. Forms heterodimers with either ThiH or ThiS.

The protein localises to the cytoplasm. The enzyme catalyses [ThiS sulfur-carrier protein]-C-terminal-Gly-aminoethanethioate + 2-iminoacetate + 1-deoxy-D-xylulose 5-phosphate = [ThiS sulfur-carrier protein]-C-terminal Gly-Gly + 2-[(2R,5Z)-2-carboxy-4-methylthiazol-5(2H)-ylidene]ethyl phosphate + 2 H2O + H(+). It participates in cofactor biosynthesis; thiamine diphosphate biosynthesis. Functionally, catalyzes the rearrangement of 1-deoxy-D-xylulose 5-phosphate (DXP) to produce the thiazole phosphate moiety of thiamine. Sulfur is provided by the thiocarboxylate moiety of the carrier protein ThiS. In vitro, sulfur can be provided by H(2)S. The chain is Thiazole synthase from Variovorax paradoxus (strain S110).